The following is a 316-amino-acid chain: MTKEFNHTTVLLHETVDMLDIKPNGIYVDATLGGAGHSEYLLSQLTDGGHLYAFDQDQTAIDHAHIRLASYIEKGQVTFIRDNFRNLKTRLAELGVTEIDGICYDLGVSSPQLDERERGFSYKQDAPLDMRMNREGHLTAYDVVNNYDYHDLVRIFFKYGEDKFSKQIARKIEQARAVKPIETTTELAELIKSAKPAKELKKKGHPAKQIFQAIRIEVNDELGAADESIQQAIDLLALDGRISVITFHSLEDRLTKQLFKEASTIDVPKGLPFIPDDLKAPLELVNRKPILPSQEELEANNRAHSAKLRVAKKVHK.

S-adenosyl-L-methionine contacts are provided by residues 35 to 37 (AGH), aspartate 55, phenylalanine 84, aspartate 105, and glutamine 112.

This sequence belongs to the methyltransferase superfamily. RsmH family.

Its subcellular location is the cytoplasm. The catalysed reaction is cytidine(1402) in 16S rRNA + S-adenosyl-L-methionine = N(4)-methylcytidine(1402) in 16S rRNA + S-adenosyl-L-homocysteine + H(+). In terms of biological role, specifically methylates the N4 position of cytidine in position 1402 (C1402) of 16S rRNA. The protein is Ribosomal RNA small subunit methyltransferase H of Streptococcus suis (strain 05ZYH33).